The following is a 195-amino-acid chain: Imidazoleglycerol-phosphate dehydratase (195 aa).

Belongs to the imidazoleglycerol-phosphate dehydratase family.

Its subcellular location is the cytoplasm. The catalysed reaction is D-erythro-1-(imidazol-4-yl)glycerol 3-phosphate = 3-(imidazol-4-yl)-2-oxopropyl phosphate + H2O. Its pathway is amino-acid biosynthesis; L-histidine biosynthesis; L-histidine from 5-phospho-alpha-D-ribose 1-diphosphate: step 6/9. The sequence is that of Imidazoleglycerol-phosphate dehydratase from Thermotoga petrophila (strain ATCC BAA-488 / DSM 13995 / JCM 10881 / RKU-1).